The sequence spans 432 residues: Phosphomethylpyrimidine synthase (432 aa).

Substrate contacts are provided by residues asparagine 66, methionine 95, tyrosine 124, histidine 163, 185 to 187 (SRG), 226 to 229 (DGLR), and glutamate 265. Residue histidine 269 coordinates Zn(2+). Tyrosine 292 contacts substrate. Histidine 333 serves as a coordination point for Zn(2+). Residues cysteine 409, cysteine 412, and cysteine 416 each contribute to the [4Fe-4S] cluster site.

It belongs to the ThiC family. Requires [4Fe-4S] cluster as cofactor.

The catalysed reaction is 5-amino-1-(5-phospho-beta-D-ribosyl)imidazole + S-adenosyl-L-methionine = 4-amino-2-methyl-5-(phosphooxymethyl)pyrimidine + CO + 5'-deoxyadenosine + formate + L-methionine + 3 H(+). The protein operates within cofactor biosynthesis; thiamine diphosphate biosynthesis. Functionally, catalyzes the synthesis of the hydroxymethylpyrimidine phosphate (HMP-P) moiety of thiamine from aminoimidazole ribotide (AIR) in a radical S-adenosyl-L-methionine (SAM)-dependent reaction. This Thermoanaerobacter sp. (strain X514) protein is Phosphomethylpyrimidine synthase.